We begin with the raw amino-acid sequence, 423 residues long: Histidine--tRNA ligase (423 aa).

This sequence belongs to the class-II aminoacyl-tRNA synthetase family. As to quaternary structure, homodimer.

The protein resides in the cytoplasm. The enzyme catalyses tRNA(His) + L-histidine + ATP = L-histidyl-tRNA(His) + AMP + diphosphate + H(+). This chain is Histidine--tRNA ligase, found in Orientia tsutsugamushi (strain Ikeda) (Rickettsia tsutsugamushi).